The sequence spans 888 residues: Patched domain-containing protein 1 (888 aa).

The helical transmembrane segment at 20–40 threads the bilayer; the sequence is FIASHPVFFASAPVLISILLG. 3 N-linked (GlcNAc...) asparagine glycosylation sites follow: Asn77, Asn133, and Asn167. The 160-residue stretch at 268–427 folds into the SSD domain; that stretch reads SERYLVTSLI…LSFYGSSLVF (160 aa). 2 helical membrane passes run 273-293 and 298-318; these read VTSLILVVTMAILCCSMQDCV and WLGLLGLVTISLATLTAAGII. N-linked (GlcNAc...) asparagine glycosylation is found at Asn319 and Asn326. The next 4 helical transmembrane spans lie at 328 to 348, 373 to 393, 407 to 427, and 502 to 522; these read TFLGVPFVMLGHGLYGTFEML, LSFSLTTAMYLVTFGIGASPF, CIAIFFNYLYVLSFYGSSLVF, and PFVVLFYLIYISFALMGYLQV. N-linked (GlcNAc...) asparagine glycosylation is found at Asn568, Asn599, and Asn608. The next 2 helical transmembrane spans lie at 707–727 and 738–758; these read ALFLLFFSAFLVADSLINVWI and VIGFMTLWKVELDCISVLCLI. A glycan (N-linked (GlcNAc...) asparagine) is linked at Asn762. The helical transmembrane segment at 795–815 threads the bilayer; sequence GVAILQSYLCYIVGLIPLAAV. The N-linked (GlcNAc...) asparagine glycan is linked to Asn818. Residues 826–846 traverse the membrane as a helical segment; the sequence is CLFLIAFVTFFHCFAILPVIL.

Belongs to the patched family. Widely expressed, including in various regions of the brain with highest expression in the gray and white cerebellum, followed by the cerebellar vermis and the pituitary gland.

The protein resides in the cell membrane. It localises to the cell projection. It is found in the dendritic spine. Functionally, required for the development and function of the thalamic reticular nucleus (TRN), a part of the thalamus that is critical for thalamocortical transmission, generation of sleep rhythms, sensorimotor processing and attention. Can bind cholesterol in vitro. This chain is Patched domain-containing protein 1, found in Homo sapiens (Human).